The primary structure comprises 380 residues: Cystathionine beta-lyase (380 aa).

Lysine 196 bears the N6-(pyridoxal phosphate)lysine mark.

It belongs to the trans-sulfuration enzymes family. It depends on pyridoxal 5'-phosphate as a cofactor.

Its subcellular location is the cytoplasm. It catalyses the reaction L,L-cystathionine + H2O = L-homocysteine + pyruvate + NH4(+). It carries out the reaction an S-substituted L-cysteine + H2O = a thiol + pyruvate + NH4(+). It functions in the pathway amino-acid biosynthesis; L-methionine biosynthesis via de novo pathway; L-homocysteine from L-cystathionine: step 1/1. The enzymatic degradation of amino acids in cheese is believed to generate aroma compounds and therefore to be essential for flavor development. Cystathionine beta-lyase (CBL) can convert cystathionine to homocysteine but is also able to catalyze an alpha, gamma elimination. With methionine as a substrate, it produces volatile sulfur compounds which are important for flavor formation in Gouda cheese. This Lactococcus lactis subsp. cremoris (Streptococcus cremoris) protein is Cystathionine beta-lyase (metC).